Reading from the N-terminus, the 45-residue chain is Photosystem II reaction center protein K (45 aa).

Residues Met1 to Ala8 constitute a propeptide that is removed on maturation. The helical transmembrane segment at Leu24–Phe44 threads the bilayer.

It belongs to the PsbK family. PSII is composed of 1 copy each of membrane proteins PsbA, PsbB, PsbC, PsbD, PsbE, PsbF, PsbH, PsbI, PsbJ, PsbK, PsbL, PsbM, PsbT, PsbX, PsbY, PsbZ, Psb30/Ycf12, peripheral proteins PsbO, CyanoQ (PsbQ), PsbU, PsbV and a large number of cofactors. It forms dimeric complexes.

It is found in the cellular thylakoid membrane. Functionally, one of the components of the core complex of photosystem II (PSII). PSII is a light-driven water:plastoquinone oxidoreductase that uses light energy to abstract electrons from H(2)O, generating O(2) and a proton gradient subsequently used for ATP formation. It consists of a core antenna complex that captures photons, and an electron transfer chain that converts photonic excitation into a charge separation. This chain is Photosystem II reaction center protein K, found in Trichodesmium erythraeum (strain IMS101).